The chain runs to 273 residues: Gamma-glutamyl cyclotransferase gliK (273 aa).

The chain crosses the membrane as a helical span at residues 227-243 (WLGWIILTLYGLMWSYH).

Belongs to the class-I pyridoxal-phosphate-dependent aminotransferase family.

Its subcellular location is the membrane. It catalyses the reaction an alpha-(gamma-L-glutamyl)-L-amino acid = 5-oxo-L-proline + an L-alpha-amino acid. It participates in mycotoxin biosynthesis. Its function is as follows. Gamma-glutamyl cyclotransferase-like protein; part of the gene cluster that mediates the biosynthesis of gliotoxin, a member of the epipolythiodioxopiperazine (ETP) class of toxins characterized by a disulfide bridged cyclic dipeptide. The first step in gliotoxin biosynthesis is the condensation of serine and phenylalanine to form the cyclo-L-phenylalanyl-L-serine diketopiperazine (DKP) by the NRPS gliP. GliP is also able to produce the DKP cyclo-L-tryptophanyl-L-serine, suggesting that the substrate specificity of the first adenylation (A) domain in gliP is sufficiently relaxed to accommodate both L-Phe and L-Trp. The cytochrome P450 monooxygenase gliC has been shown to catalyze the subsequent hydroxylation of the alpha-carbon of L-Phe in cyclo-L-phenylalanyl-L-serine whereas the second cytochrome P450 enzyme, gliF, is presumably involved in the modification of the DKP side chain. The glutathione S-transferase (GST) gliG then forms a bis-glutathionylated biosynthetic intermediate which is responsible for the sulfurization of gliotoxin. This bis-glutathionylated intermediate is subsequently processed by the gamma-glutamyl cyclotransferase gliK to remove both gamma-glutamyl moieties. Subsequent processing via gliI yields a biosynthetic intermediate, which is N-methylated via the N-methyltransferase gliN, before the gliotoxin oxidoreductase gliT-mediated disulfide bridge closure. GliN-mediated amide methylation confers stability to ETP, damping the spontaneous formation of tri- and tetrasulfides. Intracellular dithiol gliotoxin oxidized by gliT is subsequently effluxed by gliA. Gliotoxin contributes to pathogenesis during invasive aspergillosis. In macrophages and neutrophils, gliotoxin showed inhibition of various different cell functions including cytokine production, antigen presentation, phagocytosis, and production of reactive oxygen species. In Aspergillus fumigatus (strain ATCC MYA-4609 / CBS 101355 / FGSC A1100 / Af293) (Neosartorya fumigata), this protein is Gamma-glutamyl cyclotransferase gliK.